The following is a 308-amino-acid chain: Glycosyltransferase 6 domain-containing protein 1 (308 aa).

At Met-1–Met-6 the chain is on the cytoplasmic side. A helical; Signal-anchor for type II membrane protein transmembrane segment spans residues Leu-7–Phe-23. Residues Arg-24–Leu-308 are Lumenal-facing. A glycan (N-linked (GlcNAc...) asparagine) is linked at Asn-74. Substrate is bound by residues Phe-82–Phe-87, Ala-173–Asn-175, and His-195–Trp-198. The active-site Nucleophile is the Glu-263.

The protein belongs to the glycosyltransferase 6 family. It depends on Mn(2+) as a cofactor.

It localises to the membrane. This Macaca fascicularis (Crab-eating macaque) protein is Glycosyltransferase 6 domain-containing protein 1 (GLT6D1).